The primary structure comprises 433 residues: Pyroglutamylated RF-amide peptide receptor (433 aa).

Over 1-46 the chain is Extracellular; it reads MQALNITAEQFSRLLSAHNLTREQFIHRYGLRPLVYTPELPARAKL. Asparagine 5 and asparagine 19 each carry an N-linked (GlcNAc...) asparagine glycan. A helical transmembrane segment spans residues 47 to 67; the sequence is AFALAGALIFALALFGNSLVI. The Cytoplasmic segment spans residues 68–81; it reads YVVTRSKAMRTVTN. The chain crosses the membrane as a helical span at residues 82-102; the sequence is IFICSLALSDLLIAFFCIPVT. The Extracellular segment spans residues 103 to 120; the sequence is MLQNISDKWLGGAFICKM. The chain crosses the membrane as a helical span at residues 121–141; sequence VPFVQSTAVVTEILTMTCIAV. The Cytoplasmic portion of the chain corresponds to 142-162; that stretch reads ERHQGLIHPFKMKWQYTTRRA. Residues 163-183 form a helical membrane-spanning segment; it reads FTILGVVWLAAIIVGSPMWHV. Over 184-212 the chain is Extracellular; it reads QRLEIKYDFLYEKEHVCCLEEWASPMHQR. A helical membrane pass occupies residues 213–233; it reads IYTTFILVILFLLPLVVMLVL. Residues 234-271 are Cytoplasmic-facing; that stretch reads YSKIGYELWIKKRVGDSSALQTIHGKEMSKIARKKKRA. The chain crosses the membrane as a helical span at residues 272-292; sequence VVMMVTVVALFAACWAPFHVV. At 293-313 the chain is on the extracellular side; sequence HMMVEYSNFEKEYDDVTIKMV. A helical membrane pass occupies residues 314–334; the sequence is FAVAQTIGFFNSICNPFVYAF. The Cytoplasmic portion of the chain corresponds to 335–433; the sequence is MNENFKKNFL…NSTFGSGHEL (99 aa).

It belongs to the G-protein coupled receptor 1 family. As to expression, expressed widely in the brain with high levels in the cortex and hypothalamus, and moderate levels in the brain stem, caudate nucleus, midbrain hippocampus, thalamus, trigeminal ganglia and spinal cord. Particularly strong expression detected in the mitral cell layer of the olfactory bulb, accessory olfactory bulb, island of Calleja and nucleus of the solitary tract. In peripheral tissues, expressed at moderate levels in the eye, liver, kidney, pituitary gland, testis and thymus.

It is found in the cell membrane. Receptor for the orexigenic neuropeptide QRFP. The activity of this receptor is mediated by G proteins that modulate adenylate cyclase activity and intracellular calcium levels. This is Pyroglutamylated RF-amide peptide receptor (Qrfpr) from Mus musculus (Mouse).